The chain runs to 156 residues: S-ribosylhomocysteine lyase (156 aa).

3 residues coordinate Fe cation: His-54, His-58, and Cys-126.

Belongs to the LuxS family. As to quaternary structure, homodimer. Fe cation serves as cofactor.

The enzyme catalyses S-(5-deoxy-D-ribos-5-yl)-L-homocysteine = (S)-4,5-dihydroxypentane-2,3-dione + L-homocysteine. Its function is as follows. Involved in the synthesis of autoinducer 2 (AI-2) which is secreted by bacteria and is used to communicate both the cell density and the metabolic potential of the environment. The regulation of gene expression in response to changes in cell density is called quorum sensing. Catalyzes the transformation of S-ribosylhomocysteine (RHC) to homocysteine (HC) and 4,5-dihydroxy-2,3-pentadione (DPD). The chain is S-ribosylhomocysteine lyase from Shouchella clausii (strain KSM-K16) (Alkalihalobacillus clausii).